Consider the following 245-residue polypeptide: Phycocyanobilin:ferredoxin oxidoreductase (245 aa).

It belongs to the HY2 family.

It carries out the reaction (2R,3Z)-phycocyanobilin + 4 oxidized [2Fe-2S]-[ferredoxin] = biliverdin IXalpha + 4 reduced [2Fe-2S]-[ferredoxin] + 4 H(+). Catalyzes the four-electron reduction of biliverdin IX-alpha (2-electron reduction at both the A and D rings); the reaction proceeds via an isolatable 2-electron intermediate, 181,182-dihydrobiliverdin. The polypeptide is Phycocyanobilin:ferredoxin oxidoreductase (pcyA) (Nostoc punctiforme (strain ATCC 29133 / PCC 73102)).